We begin with the raw amino-acid sequence, 119 residues long: Large ribosomal subunit protein bL20 (119 aa).

It belongs to the bacterial ribosomal protein bL20 family.

Binds directly to 23S ribosomal RNA and is necessary for the in vitro assembly process of the 50S ribosomal subunit. It is not involved in the protein synthesizing functions of that subunit. This is Large ribosomal subunit protein bL20 from Stenotrophomonas maltophilia (strain R551-3).